Consider the following 101-residue polypeptide: Long chronological lifespan protein 1 (101 aa).

Positions 1–17 (MKNAALCEALPLLATCS) are cleaved as a signal peptide. S81 is lipidated: GPI-anchor amidated serine. Positions 82–101 (FAKPSFSFFFFLLTSLLSPF) are cleaved as a propeptide — removed in mature form.

Its subcellular location is the cell membrane. This Saccharomyces cerevisiae (strain ATCC 204508 / S288c) (Baker's yeast) protein is Long chronological lifespan protein 1 (LCL1).